The sequence spans 107 residues: U1-lycotoxin-Ls1b (107 aa).

Positions 1–20 (MMKALVVVALLVTLISYSSS) are cleaved as a signal peptide. Positions 21-41 (EGIDDLEADELLSLMANEQTR) are excised as a propeptide. Disulfide bonds link C44–C59, C51–C68, C58–C86, and C70–C84.

This sequence belongs to the neurotoxin 19 (CSTX) family. 04 (U1-Lctx) subfamily. In terms of tissue distribution, expressed by the venom gland.

The protein resides in the secreted. This chain is U1-lycotoxin-Ls1b, found in Lycosa singoriensis (Wolf spider).